The chain runs to 285 residues: MARCO-like protein (285 aa).

The N-terminal stretch at 1–20 (MRAFIFFLFMLLAMFSASST) is a signal peptide. N-linked (GlcNAc...) asparagine glycosylation occurs at N24. Disordered regions lie at residues 47 to 77 (NHLG…GQPG) and 91 to 285 (GRAG…QGNL). 2 stretches are compositionally biased toward polar residues: residues 57-67 (KQGGSYTQGNP) and 105-114 (SGKSNQKGNP). Positions 115–128 (ESSNKQENSGSSSQ) are enriched in low complexity. A compositionally biased stretch (polar residues) spans 134-145 (ISTQQGNPGSSD). Over residues 160-173 (GSSSQQGKPGSSSQ) the composition is skewed to low complexity. Residues 174 to 185 (HGNLGSSTQKGN) show a composition bias toward polar residues. The span at 186–220 (LGSSSLQGHLGLSSHQGKPESSGQQGKPGSSSQQG) shows a compositional bias: low complexity. Positions 221–285 (NLGTSGQQEK…PGSSSRQGNL (65 aa)) are enriched in polar residues.

This is MARCO-like protein from Homo sapiens (Human).